A 151-amino-acid chain; its full sequence is UPF0208 membrane protein YPTB2595 (151 aa).

2 helical membrane passes run 46–66 (FGIR…IALG) and 69–89 (LGPA…GLWW).

Belongs to the UPF0208 family.

It is found in the cell inner membrane. This Yersinia pseudotuberculosis serotype I (strain IP32953) protein is UPF0208 membrane protein YPTB2595.